Consider the following 970-residue polypeptide: N-alpha-acetyltransferase 25, NatB auxiliary subunit (970 aa).

TPR repeat units follow at residues Asn11–Leu44, His45–Asp78, Asp79–Ser112, and Glu114–Asn146.

This sequence belongs to the MDM20/NAA25 family. As to quaternary structure, component of the N-terminal acetyltransferase B (NatB) complex which is composed of NAA20 and NAA25.

The protein localises to the cytoplasm. Its function is as follows. Non-catalytic subunit of the NatB complex which catalyzes acetylation of the N-terminal methionine residues of peptides beginning with Met-Asp, Met-Glu, Met-Asn and Met-Gln. May play a role in normal cell-cycle progression. This Rattus norvegicus (Rat) protein is N-alpha-acetyltransferase 25, NatB auxiliary subunit (Naa25).